Reading from the N-terminus, the 396-residue chain is DNA polymerase processivity factor (396 aa).

Positions 306–396 are disordered; that stretch reads AEGGESSQKV…VPKTTFNPLI (91 aa). Over residues 376-386 the composition is skewed to basic and acidic residues; sequence SDSSQSRDRGK.

Belongs to the herpesviridae DNA polymerase accessory subunit family. As to quaternary structure, homooligomerizes and adopts an oligomeric ring-shaped structure composed of 6 subunits. Forms a complex with the DNA-binding protein, the DNA polymerase subunit, and the alkaline exonuclease.

The protein localises to the virion tegument. It localises to the host nucleus. Functionally, plays an essential role in the viral lytic DNA replication by acting as the polymerase accessory subunit. Stimulates the viral DNA polymerase activity and appears to function with it as a holoenzyme. Increases the processivity of the viral polymerase, probably by acting as a sliding clamp that prevents dissociation of the polymerase from the active template. This chain is DNA polymerase processivity factor (ORF59), found in Homo sapiens (Human).